The sequence spans 486 residues: ATP synthase subunit beta (486 aa).

170-177 serves as a coordination point for ATP; sequence GGAGVGKT.

It belongs to the ATPase alpha/beta chains family. F-type ATPases have 2 components, CF(1) - the catalytic core - and CF(0) - the membrane proton channel. CF(1) has five subunits: alpha(3), beta(3), gamma(1), delta(1), epsilon(1). CF(0) has three main subunits: a(1), b(2) and c(9-12). The alpha and beta chains form an alternating ring which encloses part of the gamma chain. CF(1) is attached to CF(0) by a central stalk formed by the gamma and epsilon chains, while a peripheral stalk is formed by the delta and b chains.

It is found in the cell membrane. The enzyme catalyses ATP + H2O + 4 H(+)(in) = ADP + phosphate + 5 H(+)(out). Functionally, produces ATP from ADP in the presence of a proton gradient across the membrane. The catalytic sites are hosted primarily by the beta subunits. The chain is ATP synthase subunit beta from Kineococcus radiotolerans (strain ATCC BAA-149 / DSM 14245 / SRS30216).